The following is a 156-amino-acid chain: Small ribosomal subunit protein uS7 (156 aa).

The protein belongs to the universal ribosomal protein uS7 family. In terms of assembly, part of the 30S ribosomal subunit. Contacts proteins S9 and S11.

Functionally, one of the primary rRNA binding proteins, it binds directly to 16S rRNA where it nucleates assembly of the head domain of the 30S subunit. Is located at the subunit interface close to the decoding center, probably blocks exit of the E-site tRNA. The polypeptide is Small ribosomal subunit protein uS7 (Mycobacterium leprae (strain Br4923)).